Consider the following 776-residue polypeptide: Protein translocase subunit SecA 2 (776 aa).

Residues Q80, 98–102, and D486 each bind ATP; that span reads GEGKT.

Belongs to the SecA family. As to quaternary structure, monomer and homodimer. Part of the essential Sec protein translocation apparatus which comprises SecA, SecYEG and auxiliary proteins SecDF. Other proteins may also be involved.

It localises to the cell membrane. It is found in the cytoplasm. It carries out the reaction ATP + H2O + cellular proteinSide 1 = ADP + phosphate + cellular proteinSide 2.. Part of the Sec protein translocase complex. Interacts with the SecYEG preprotein conducting channel. Has a central role in coupling the hydrolysis of ATP to the transfer of proteins into and across the cell membrane, serving as an ATP-driven molecular motor driving the stepwise translocation of polypeptide chains across the membrane. This Listeria monocytogenes serotype 1/2a (strain 10403S) protein is Protein translocase subunit SecA 2.